Here is a 293-residue protein sequence, read N- to C-terminus: Ribosomal RNA small subunit methyltransferase A (293 aa).

S-adenosyl-L-methionine contacts are provided by Asn-29, Leu-31, Gly-56, Glu-77, Asp-102, and Asn-127.

It belongs to the class I-like SAM-binding methyltransferase superfamily. rRNA adenine N(6)-methyltransferase family. RsmA subfamily.

It is found in the cytoplasm. The catalysed reaction is adenosine(1518)/adenosine(1519) in 16S rRNA + 4 S-adenosyl-L-methionine = N(6)-dimethyladenosine(1518)/N(6)-dimethyladenosine(1519) in 16S rRNA + 4 S-adenosyl-L-homocysteine + 4 H(+). In terms of biological role, specifically dimethylates two adjacent adenosines (A1518 and A1519) in the loop of a conserved hairpin near the 3'-end of 16S rRNA in the 30S particle. May play a critical role in biogenesis of 30S subunits. This chain is Ribosomal RNA small subunit methyltransferase A, found in Lysinibacillus sphaericus (strain C3-41).